The primary structure comprises 377 residues: Nitric oxide reductase FlRd-NAD(+) reductase (377 aa).

This sequence belongs to the FAD-dependent oxidoreductase family. FAD is required as a cofactor.

The protein localises to the cytoplasm. It carries out the reaction 2 reduced [nitric oxide reductase rubredoxin domain] + NAD(+) + H(+) = 2 oxidized [nitric oxide reductase rubredoxin domain] + NADH. It participates in nitrogen metabolism; nitric oxide reduction. One of at least two accessory proteins for anaerobic nitric oxide (NO) reductase. Reduces the rubredoxin moiety of NO reductase. The polypeptide is Nitric oxide reductase FlRd-NAD(+) reductase (Escherichia coli O157:H7).